The primary structure comprises 384 residues: Chorismate synthase (384 aa).

Residues Arg-40 and Arg-46 each coordinate NADP(+). Residues 128–130 (RAS), Gly-292, 307–311 (KPIPT), and Arg-333 each bind FMN.

It belongs to the chorismate synthase family. In terms of assembly, homotetramer. The cofactor is FMNH2.

The enzyme catalyses 5-O-(1-carboxyvinyl)-3-phosphoshikimate = chorismate + phosphate. It functions in the pathway metabolic intermediate biosynthesis; chorismate biosynthesis; chorismate from D-erythrose 4-phosphate and phosphoenolpyruvate: step 7/7. In terms of biological role, catalyzes the anti-1,4-elimination of the C-3 phosphate and the C-6 proR hydrogen from 5-enolpyruvylshikimate-3-phosphate (EPSP) to yield chorismate, which is the branch point compound that serves as the starting substrate for the three terminal pathways of aromatic amino acid biosynthesis. This reaction introduces a second double bond into the aromatic ring system. This chain is Chorismate synthase, found in Carboxydothermus hydrogenoformans (strain ATCC BAA-161 / DSM 6008 / Z-2901).